Here is a 115-residue protein sequence, read N- to C-terminus: Photosystem II reaction center Psb28 protein (115 aa).

It belongs to the Psb28 family. Part of the photosystem II complex.

Its subcellular location is the plastid. The protein localises to the chloroplast thylakoid membrane. In Trieres chinensis (Marine centric diatom), this protein is Photosystem II reaction center Psb28 protein.